A 482-amino-acid chain; its full sequence is Protein nucleotidyltransferase YdiU (482 aa).

G88, G90, R91, K111, D123, G124, R174, and R181 together coordinate ATP. D250 serves as the catalytic Proton acceptor. N251 and D260 together coordinate Mg(2+). D260 is an ATP binding site.

Belongs to the SELO family. Mg(2+) serves as cofactor. Mn(2+) is required as a cofactor.

The enzyme catalyses L-seryl-[protein] + ATP = 3-O-(5'-adenylyl)-L-seryl-[protein] + diphosphate. It carries out the reaction L-threonyl-[protein] + ATP = 3-O-(5'-adenylyl)-L-threonyl-[protein] + diphosphate. The catalysed reaction is L-tyrosyl-[protein] + ATP = O-(5'-adenylyl)-L-tyrosyl-[protein] + diphosphate. It catalyses the reaction L-histidyl-[protein] + UTP = N(tele)-(5'-uridylyl)-L-histidyl-[protein] + diphosphate. The enzyme catalyses L-seryl-[protein] + UTP = O-(5'-uridylyl)-L-seryl-[protein] + diphosphate. It carries out the reaction L-tyrosyl-[protein] + UTP = O-(5'-uridylyl)-L-tyrosyl-[protein] + diphosphate. In terms of biological role, nucleotidyltransferase involved in the post-translational modification of proteins. It can catalyze the addition of adenosine monophosphate (AMP) or uridine monophosphate (UMP) to a protein, resulting in modifications known as AMPylation and UMPylation. The protein is Protein nucleotidyltransferase YdiU of Cronobacter sakazakii (strain ATCC BAA-894) (Enterobacter sakazakii).